Reading from the N-terminus, the 364-residue chain is Chorismate synthase (364 aa).

NADP(+) is bound by residues arginine 48 and arginine 54. FMN is bound by residues 125–127 (RSS), 238–239 (NA), glycine 278, 293–297 (KPTSS), and arginine 319.

It belongs to the chorismate synthase family. In terms of assembly, homotetramer. It depends on FMNH2 as a cofactor.

It catalyses the reaction 5-O-(1-carboxyvinyl)-3-phosphoshikimate = chorismate + phosphate. The protein operates within metabolic intermediate biosynthesis; chorismate biosynthesis; chorismate from D-erythrose 4-phosphate and phosphoenolpyruvate: step 7/7. Its function is as follows. Catalyzes the anti-1,4-elimination of the C-3 phosphate and the C-6 proR hydrogen from 5-enolpyruvylshikimate-3-phosphate (EPSP) to yield chorismate, which is the branch point compound that serves as the starting substrate for the three terminal pathways of aromatic amino acid biosynthesis. This reaction introduces a second double bond into the aromatic ring system. This Shewanella sediminis (strain HAW-EB3) protein is Chorismate synthase.